Here is a 283-residue protein sequence, read N- to C-terminus: CASP-like protein 4A3 (283 aa).

The interval 1-86 (MRSPAKTMPS…VEETPSPIVV (86 aa)) is disordered. The Cytoplasmic segment spans residues 1–135 (MRSPAKTMPS…SRREEVVKFS (135 aa)). Residues 9–20 (PSMSPSSVSTEK) are compositionally biased toward low complexity. A compositionally biased stretch (basic and acidic residues) spans 50-79 (SLDHSSESEKEDAKSKPESRRNKNPGKVEE). Residues 136 to 156 (ALGFRLSEVVLALISFSIMAA) traverse the membrane as a helical segment. At 157 to 174 (DKTKGWSGDSFDRYKEYR) the chain is on the extracellular side. A helical transmembrane segment spans residues 175–195 (FCLSVNVVAFVYSSFQACDLA). Over 196–212 (YHLVKEKHLISHHLRPL) the chain is Cytoplasmic. Residues 213 to 233 (FEFIIDQVLAYLLMSASTAAV) traverse the membrane as a helical segment. At 234–251 (TRVDDWVSNWGKDEFTEM) the chain is on the extracellular side. The helical transmembrane segment at 252 to 272 (ASASIAMSFLAFLAFAFSSLI) threads the bilayer. At 273–283 (SGYNLFNQGSL) the chain is on the cytoplasmic side.

The protein belongs to the Casparian strip membrane proteins (CASP) family. Homodimer and heterodimers.

The protein resides in the cell membrane. This Arabidopsis thaliana (Mouse-ear cress) protein is CASP-like protein 4A3.